Reading from the N-terminus, the 338-residue chain is Tetraacyldisaccharide 4'-kinase (338 aa).

67 to 74 contacts ATP; it reads IAGGAGKT.

The protein belongs to the LpxK family.

It carries out the reaction a lipid A disaccharide + ATP = a lipid IVA + ADP + H(+). It functions in the pathway glycolipid biosynthesis; lipid IV(A) biosynthesis; lipid IV(A) from (3R)-3-hydroxytetradecanoyl-[acyl-carrier-protein] and UDP-N-acetyl-alpha-D-glucosamine: step 6/6. Functionally, transfers the gamma-phosphate of ATP to the 4'-position of a tetraacyldisaccharide 1-phosphate intermediate (termed DS-1-P) to form tetraacyldisaccharide 1,4'-bis-phosphate (lipid IVA). In Acidovorax sp. (strain JS42), this protein is Tetraacyldisaccharide 4'-kinase.